We begin with the raw amino-acid sequence, 784 residues long: Toll-like receptor 2 (784 aa).

The signal sequence occupies residues 1 to 20 (MPHTLWMVWVLGVIISLSKE). Residues 21-587 (ESSNQASLSC…VRLSVSECHR (567 aa)) lie on the Extracellular side of the membrane. An intrachain disulfide couples Cys30 to Cys36. LRR repeat units lie at residues 54–77 (VKSLDLSNNRITYISNSDLQRCVN), 78–101 (LQALVLTSNGINTIEEDSFSSLGS), 102–125 (LEHLDLSYNYLSNLSSSWFKPLSS), 126–150 (LTFLNLLGNPYKTLGETSLFSHLTK), 151–175 (LQILRVGNMDTFTKIQRKDFAGLTF), 176–199 (LEELEIDASDLQSYEPKSLKSIQN), 200–223 (VSHLILHMKQHILLLEIFVDVTSS), 224–250 (VECLELRDTDLDTFRFSELSTGETNSL), 251–278 (IKKFTFRNVKITDESLFQVMKLLNQISG), 279–308 (LLELEFDDCTLNGVGNFRASDNDRVIDPGK), 309–337 (VETLTIRRLHIPRFYLFYDLSTLYSLTER), 338–361 (VKRITVENSKVFLVPCLLSQHLKS), 362–388 (LEYLDLSENLIVEEYLKNSACEDAWPS), 389–414 (LQTLILRQNHLASLEKTGETLLTLKN), 415–437 (LTNVDISKNSFHSMPETCQWPEK), 438–457 (MKYLNLSSTRIHSVTGCIPK), 458–478 (TLEILDVSNNNLNLFSLNLPQ), 479–500 (LKELYISRNKLMTLPDASLLPM), and 501–524 (LLVLKISRNAITTFSKEQLDSFHT). A glycan (N-linked (GlcNAc...) asparagine) is linked at Asn114. Asn199 is a glycosylation site (N-linked (GlcNAc...) asparagine). A disulfide bridge connects residues Cys353 and Cys382. Asn414 carries N-linked (GlcNAc...) asparagine glycosylation. An intrachain disulfide couples Cys432 to Cys454. The N-linked (GlcNAc...) asparagine glycan is linked to Asn442. The LRRCT domain occupies 525 to 579 (LKTLEAGGNNFICSCEFLSFTQEQQALAKVLIDWPANYLCDSPSHVRGQQVQDVR). Residues 588 to 608 (TALVSGMCCALFLLILLTGVL) traverse the membrane as a helical segment. Residues 609–784 (CHRFHGLWYM…WVNLRAAIKS (176 aa)) are Cytoplasmic-facing. One can recognise a TIR domain in the interval 639 to 782 (ICYDAFVSYS…GFWVNLRAAI (144 aa)). Residue Lys754 forms a Glycyl lysine isopeptide (Lys-Gly) (interchain with G-Cter in ubiquitin) linkage. The ATG16L1-binding motif motif lies at 761-778 (YLEWPMDEAQREGFWVNL).

Belongs to the Toll-like receptor family. Interacts with LY96, TLR1 and TLR6 (via extracellular domain). TLR2 seems to exist in heterodimers with either TLR1 or TLR6 before stimulation by the ligand. The heterodimers form bigger oligomers in response to their corresponding ligands as well as further heterotypic associations with other receptors such as CD14 and/or CD36. Binds MYD88 (via TIR domain). Interacts with TICAM1. Interacts with CNPY3. Interacts with ATG16L1. Interacts with PPP1R11. Interacts with TICAM2. Interacts with TIRAP. In terms of processing, ubiquitinated at Lys-754 by PPP1R11, leading to its degradation. Deubiquitinated by USP2. Post-translationally, glycosylation of Asn-442 is critical for secretion of the N-terminal ectodomain of TLR2.

Its subcellular location is the membrane. The protein localises to the cytoplasmic vesicle. It is found in the phagosome membrane. It localises to the membrane raft. In terms of biological role, cooperates with LY96 to mediate the innate immune response to bacterial lipoproteins and other microbial cell wall components. Cooperates with TLR1 or TLR6 to mediate the innate immune response to bacterial lipoproteins or lipopeptides. Acts via MYD88 and TRAF6, leading to NF-kappa-B activation, cytokine secretion and the inflammatory response. May also promote apoptosis in response to lipoproteins. Forms activation clusters composed of several receptors depending on the ligand, these clusters trigger signaling from the cell surface and subsequently are targeted to the Golgi in a lipid-raft dependent pathway. Forms the cluster TLR2:TLR6:CD14:CD36 in response to diacylated lipopeptides and TLR2:TLR1:CD14 in response to triacylated lipopeptides. In Pan troglodytes (Chimpanzee), this protein is Toll-like receptor 2 (TLR2).